Here is a 194-residue protein sequence, read N- to C-terminus: ATP-dependent Clp protease proteolytic subunit (194 aa).

Serine 98 (nucleophile) is an active-site residue. Histidine 123 is a catalytic residue.

It belongs to the peptidase S14 family. In terms of assembly, fourteen ClpP subunits assemble into 2 heptameric rings which stack back to back to give a disk-like structure with a central cavity, resembling the structure of eukaryotic proteasomes.

It is found in the cytoplasm. The catalysed reaction is Hydrolysis of proteins to small peptides in the presence of ATP and magnesium. alpha-casein is the usual test substrate. In the absence of ATP, only oligopeptides shorter than five residues are hydrolyzed (such as succinyl-Leu-Tyr-|-NHMec, and Leu-Tyr-Leu-|-Tyr-Trp, in which cleavage of the -Tyr-|-Leu- and -Tyr-|-Trp bonds also occurs).. Functionally, cleaves peptides in various proteins in a process that requires ATP hydrolysis. Has a chymotrypsin-like activity. Plays a major role in the degradation of misfolded proteins. The protein is ATP-dependent Clp protease proteolytic subunit of Ruminiclostridium cellulolyticum (strain ATCC 35319 / DSM 5812 / JCM 6584 / H10) (Clostridium cellulolyticum).